A 78-amino-acid polypeptide reads, in one-letter code: U-scoloptoxin(04)-Er1b (78 aa).

The signal sequence occupies residues 1–24; the sequence is MTRHLIFAAVLLVCLFVCWNAVGA. A propeptide spanning residues 25–28 is cleaved from the precursor; that stretch reads QDAR.

It belongs to the scoloptoxin-04 family. Contains 2 disulfide bonds. As to expression, expressed by the venom gland.

Its subcellular location is the secreted. This is U-scoloptoxin(04)-Er1b from Ethmostigmus rubripes (Giant centipede).